A 300-amino-acid polypeptide reads, in one-letter code: Mitochondrial GTP/GDP carrier protein 1 (300 aa).

Solcar repeat units follow at residues 8–108, 117–198, and 208–293; these read QSGL…KKDF, GKAM…AKEY, and ATWS…LIPR. A run of 6 helical transmembrane segments spans residues 14-34, 85-101, 122-142, 173-189, 214-234, and 268-285; these read LLGS…VDTI, QRVY…EFLN, SAAA…LDVL, GWGW…FALF, FISS…LDVI, and GLTP…FSFA.

Belongs to the mitochondrial carrier (TC 2.A.29) family.

It localises to the mitochondrion inner membrane. Mitochondrial GTP/GDP transporter required for GTP uptake and GDP exit from mitochondria. Involved in mitochondrial iron transport and essential for mitochondrial genome maintenance. The protein is Mitochondrial GTP/GDP carrier protein 1 (GGC1) of Saccharomyces cerevisiae (strain ATCC 204508 / S288c) (Baker's yeast).